The sequence spans 328 residues: GMP reductase (328 aa).

Cysteine 176 acts as the Thioimidate intermediate in catalysis. NADP(+) is bound at residue 205 to 228 (IIADGGIRTHGDIAKSIRFGASMI).

It belongs to the IMPDH/GMPR family. GuaC type 2 subfamily.

The enzyme catalyses IMP + NH4(+) + NADP(+) = GMP + NADPH + 2 H(+). Its function is as follows. Catalyzes the irreversible NADPH-dependent deamination of GMP to IMP. It functions in the conversion of nucleobase, nucleoside and nucleotide derivatives of G to A nucleotides, and in maintaining the intracellular balance of A and G nucleotides. This Streptococcus pneumoniae serotype 2 (strain D39 / NCTC 7466) protein is GMP reductase.